Here is a 295-residue protein sequence, read N- to C-terminus: Cytidine deaminase (295 aa).

CMP/dCMP-type deaminase domains lie at 48–168 (EDSD…FGPA) and 187–295 (DDDE…YLSL). 89-91 (NME) is a binding site for substrate. Histidine 102 lines the Zn(2+) pocket. The active-site Proton donor is the glutamate 104. Positions 129 and 132 each coordinate Zn(2+).

Belongs to the cytidine and deoxycytidylate deaminase family. Homodimer. Zn(2+) is required as a cofactor.

It carries out the reaction cytidine + H2O + H(+) = uridine + NH4(+). The enzyme catalyses 2'-deoxycytidine + H2O + H(+) = 2'-deoxyuridine + NH4(+). Its function is as follows. This enzyme scavenges exogenous and endogenous cytidine and 2'-deoxycytidine for UMP synthesis. In Vibrio cholerae serotype O1 (strain ATCC 39541 / Classical Ogawa 395 / O395), this protein is Cytidine deaminase.